The following is a 116-amino-acid chain: NADH-ubiquinone oxidoreductase chain 3 (116 aa).

A run of 3 helical transmembrane segments spans residues 3-23 (LILA…MIAF), 56-76 (FFLV…LLPL), and 85-105 (PTLA…GLIH).

It belongs to the complex I subunit 3 family.

The protein localises to the mitochondrion membrane. It catalyses the reaction a ubiquinone + NADH + 5 H(+)(in) = a ubiquinol + NAD(+) + 4 H(+)(out). Core subunit of the mitochondrial membrane respiratory chain NADH dehydrogenase (Complex I) that is believed to belong to the minimal assembly required for catalysis. Complex I functions in the transfer of electrons from NADH to the respiratory chain. The immediate electron acceptor for the enzyme is believed to be ubiquinone. The chain is NADH-ubiquinone oxidoreductase chain 3 (MT-ND3) from Latimeria chalumnae (Coelacanth).